We begin with the raw amino-acid sequence, 331 residues long: Ketol-acid reductoisomerase (NADP(+)) (331 aa).

The KARI N-terminal Rossmann domain maps to 2–182 (AQLFYDTDAD…GGTRAGILET (181 aa)). Residues 25–28 (YGSQ), serine 51, serine 53, and 83–86 (DEFQ) contribute to the NADP(+) site. The active site involves histidine 108. Glycine 134 provides a ligand contact to NADP(+). Residues 183 to 328 (NFKEETETDL…KGLRSMFSWL (146 aa)) enclose the KARI C-terminal knotted domain. Mg(2+) contacts are provided by aspartate 191, glutamate 195, glutamate 227, and glutamate 231. Residue serine 252 participates in substrate binding.

The protein belongs to the ketol-acid reductoisomerase family. Mg(2+) serves as cofactor.

The catalysed reaction is (2R)-2,3-dihydroxy-3-methylbutanoate + NADP(+) = (2S)-2-acetolactate + NADPH + H(+). It catalyses the reaction (2R,3R)-2,3-dihydroxy-3-methylpentanoate + NADP(+) = (S)-2-ethyl-2-hydroxy-3-oxobutanoate + NADPH + H(+). It participates in amino-acid biosynthesis; L-isoleucine biosynthesis; L-isoleucine from 2-oxobutanoate: step 2/4. Its pathway is amino-acid biosynthesis; L-valine biosynthesis; L-valine from pyruvate: step 2/4. In terms of biological role, involved in the biosynthesis of branched-chain amino acids (BCAA). Catalyzes an alkyl-migration followed by a ketol-acid reduction of (S)-2-acetolactate (S2AL) to yield (R)-2,3-dihydroxy-isovalerate. In the isomerase reaction, S2AL is rearranged via a Mg-dependent methyl migration to produce 3-hydroxy-3-methyl-2-ketobutyrate (HMKB). In the reductase reaction, this 2-ketoacid undergoes a metal-dependent reduction by NADPH to yield (R)-2,3-dihydroxy-isovalerate. In Synechococcus sp. (strain WH7803), this protein is Ketol-acid reductoisomerase (NADP(+)).